Here is a 47-residue protein sequence, read N- to C-terminus: Photosystem II reaction center protein K (47 aa).

Residues 1 to 10 (MAAFTLDLMA) constitute a propeptide that is removed on maturation. Residues 20-40 (APAVDVLPLIPIFFFLLVFVW) traverse the membrane as a helical segment.

It belongs to the PsbK family. As to quaternary structure, PSII is composed of 1 copy each of membrane proteins PsbA, PsbB, PsbC, PsbD, PsbE, PsbF, PsbH, PsbI, PsbJ, PsbK, PsbL, PsbM, PsbT, PsbX, PsbY, Psb30/Ycf12, peripheral proteins PsbO, CyanoQ (PsbQ), PsbU, PsbV and a large number of cofactors. It forms dimeric complexes.

The protein resides in the cellular thylakoid membrane. Its function is as follows. One of the components of the core complex of photosystem II (PSII). PSII is a light-driven water:plastoquinone oxidoreductase that uses light energy to abstract electrons from H(2)O, generating O(2) and a proton gradient subsequently used for ATP formation. It consists of a core antenna complex that captures photons, and an electron transfer chain that converts photonic excitation into a charge separation. The polypeptide is Photosystem II reaction center protein K (Prochlorococcus marinus (strain MIT 9303)).